The sequence spans 207 residues: N-(5'-phosphoribosyl)anthranilate isomerase (207 aa).

It belongs to the TrpF family.

The enzyme catalyses N-(5-phospho-beta-D-ribosyl)anthranilate = 1-(2-carboxyphenylamino)-1-deoxy-D-ribulose 5-phosphate. It participates in amino-acid biosynthesis; L-tryptophan biosynthesis; L-tryptophan from chorismate: step 3/5. The protein is N-(5'-phosphoribosyl)anthranilate isomerase of Staphylococcus epidermidis (strain ATCC 35984 / DSM 28319 / BCRC 17069 / CCUG 31568 / BM 3577 / RP62A).